The sequence spans 409 residues: Protein a6 (409 aa).

The residue at position 86 (S86) is a Phosphoserine. Residues 106 to 120 show a composition bias toward basic residues; the sequence is RAHRTGRRQAPRRAA. The segment at 106–165 is disordered; sequence RAHRTGRRQAPRRAATHSYPVTDSILITSDDEHNEQEPSSTARVRSQLSMRSPPPLAPLT. At T133 the chain carries Phosphothreonine. S134 is modified (phosphoserine). Polar residues predominate over residues 142-155; that stretch reads EPSSTARVRSQLSM.

This Drosophila melanogaster (Fruit fly) protein is Protein a6 (a6).